Here is an 896-residue protein sequence, read N- to C-terminus: Protein translocase subunit SecA (896 aa).

Residues Gln-87, 105 to 109, and Asp-512 each bind ATP; that span reads GEGKT. Positions 858-886 are disordered; that stretch reads RAGGEAEAAKPVVRDEKKVGRNDPCPCGS. The segment covering 869–878 has biased composition (basic and acidic residues); the sequence is VVRDEKKVGR. Cys-882, Cys-884, Cys-893, and Cys-894 together coordinate Zn(2+).

It belongs to the SecA family. As to quaternary structure, monomer and homodimer. Part of the essential Sec protein translocation apparatus which comprises SecA, SecYEG and auxiliary proteins SecDF-YajC and YidC. The cofactor is Zn(2+).

It localises to the cell inner membrane. The protein resides in the cytoplasm. It carries out the reaction ATP + H2O + cellular proteinSide 1 = ADP + phosphate + cellular proteinSide 2.. Part of the Sec protein translocase complex. Interacts with the SecYEG preprotein conducting channel. Has a central role in coupling the hydrolysis of ATP to the transfer of proteins into and across the cell membrane, serving as an ATP-driven molecular motor driving the stepwise translocation of polypeptide chains across the membrane. The sequence is that of Protein translocase subunit SecA from Syntrophotalea carbinolica (strain DSM 2380 / NBRC 103641 / GraBd1) (Pelobacter carbinolicus).